A 428-amino-acid polypeptide reads, in one-letter code: Glutamate-1-semialdehyde 2,1-aminomutase (428 aa).

N6-(pyridoxal phosphate)lysine is present on K265.

The protein belongs to the class-III pyridoxal-phosphate-dependent aminotransferase family. HemL subfamily. In terms of assembly, homodimer. Pyridoxal 5'-phosphate serves as cofactor.

The protein localises to the cytoplasm. It catalyses the reaction (S)-4-amino-5-oxopentanoate = 5-aminolevulinate. It functions in the pathway porphyrin-containing compound metabolism; protoporphyrin-IX biosynthesis; 5-aminolevulinate from L-glutamyl-tRNA(Glu): step 2/2. This chain is Glutamate-1-semialdehyde 2,1-aminomutase, found in Hamiltonella defensa subsp. Acyrthosiphon pisum (strain 5AT).